We begin with the raw amino-acid sequence, 752 residues long: GTPase-activating protein rrc-1 (752 aa).

One can recognise an SH3 domain in the interval 165–244; it reads PAIAAAVVTK…PRDCVMLIDD (80 aa). Positions 281 to 463 constitute a Rho-GAP domain; the sequence is LELTELFMRT…FCIENSDSLF (183 aa). Disordered stretches follow at residues 523–552 and 582–609; these read STGE…ATFQ and RSMR…GANN.

Its function is as follows. Functions as a GTPase-activating protein (GAP) for ced-10/RAC-1 and CDC42. In Caenorhabditis briggsae, this protein is GTPase-activating protein rrc-1.